Consider the following 358-residue polypeptide: S-adenosylmethionine decarboxylase proenzyme (358 aa).

Active-site residues include glutamate 11 and glutamate 14. The Schiff-base intermediate with substrate; via pyruvic acid role is filled by serine 71. The residue at position 71 (serine 71) is a Pyruvic acid (Ser); by autocatalysis. Cysteine 85 functions as the Proton donor; for catalytic activity in the catalytic mechanism. Catalysis depends on proton acceptor; for processing activity residues serine 234 and histidine 247.

The protein belongs to the eukaryotic AdoMetDC family. Pyruvate serves as cofactor. Post-translationally, is synthesized initially as an inactive proenzyme. Formation of the active enzyme involves a self-maturation process in which the active site pyruvoyl group is generated from an internal serine residue via an autocatalytic post-translational modification. Two non-identical subunits are generated from the proenzyme in this reaction, and the pyruvate is formed at the N-terminus of the alpha chain, which is derived from the carboxyl end of the proenzyme. The post-translation cleavage follows an unusual pathway, termed non-hydrolytic serinolysis, in which the side chain hydroxyl group of the serine supplies its oxygen atom to form the C-terminus of the beta chain, while the remainder of the serine residue undergoes an oxidative deamination to produce ammonia and the pyruvoyl group blocking the N-terminus of the alpha chain.

The enzyme catalyses S-adenosyl-L-methionine + H(+) = S-adenosyl 3-(methylsulfanyl)propylamine + CO2. It functions in the pathway amine and polyamine biosynthesis; S-adenosylmethioninamine biosynthesis; S-adenosylmethioninamine from S-adenosyl-L-methionine: step 1/1. This chain is S-adenosylmethionine decarboxylase proenzyme (SAMDC), found in Solanum chilense (Tomato).